The following is a 522-amino-acid chain: 2-isopropylmalate synthase (522 aa).

Residues 5-267 (VIIFDTTLRD…DCGINAKEIH (263 aa)) form the Pyruvate carboxyltransferase domain. The Mn(2+) site is built by D14, H202, H204, and N238. The interval 392-522 (QLQHMMVHSD…IHKERELGGV (131 aa)) is regulatory domain.

The protein belongs to the alpha-IPM synthase/homocitrate synthase family. LeuA type 1 subfamily. Homodimer. Mn(2+) serves as cofactor.

The protein localises to the cytoplasm. The catalysed reaction is 3-methyl-2-oxobutanoate + acetyl-CoA + H2O = (2S)-2-isopropylmalate + CoA + H(+). Its pathway is amino-acid biosynthesis; L-leucine biosynthesis; L-leucine from 3-methyl-2-oxobutanoate: step 1/4. Catalyzes the condensation of the acetyl group of acetyl-CoA with 3-methyl-2-oxobutanoate (2-ketoisovalerate) to form 3-carboxy-3-hydroxy-4-methylpentanoate (2-isopropylmalate). This Shewanella frigidimarina (strain NCIMB 400) protein is 2-isopropylmalate synthase.